Consider the following 383-residue polypeptide: Queuine tRNA-ribosyltransferase (383 aa).

D90 serves as the catalytic Proton acceptor. Residues 90 to 94, D144, Q193, and G227 each bind substrate; that span reads DSGGF. The interval 258-264 is RNA binding; the sequence is GVGTPED. D277 acts as the Nucleophile in catalysis. Positions 282-286 are RNA binding; important for wobble base 34 recognition; the sequence is TRNAR. Zn(2+) is bound by residues C315, C317, C320, and H346.

This sequence belongs to the queuine tRNA-ribosyltransferase family. In terms of assembly, homodimer. Within each dimer, one monomer is responsible for RNA recognition and catalysis, while the other monomer binds to the replacement base PreQ1. Zn(2+) serves as cofactor.

The catalysed reaction is 7-aminomethyl-7-carbaguanine + guanosine(34) in tRNA = 7-aminomethyl-7-carbaguanosine(34) in tRNA + guanine. Its pathway is tRNA modification; tRNA-queuosine biosynthesis. Its function is as follows. Catalyzes the base-exchange of a guanine (G) residue with the queuine precursor 7-aminomethyl-7-deazaguanine (PreQ1) at position 34 (anticodon wobble position) in tRNAs with GU(N) anticodons (tRNA-Asp, -Asn, -His and -Tyr). Catalysis occurs through a double-displacement mechanism. The nucleophile active site attacks the C1' of nucleotide 34 to detach the guanine base from the RNA, forming a covalent enzyme-RNA intermediate. The proton acceptor active site deprotonates the incoming PreQ1, allowing a nucleophilic attack on the C1' of the ribose to form the product. After dissociation, two additional enzymatic reactions on the tRNA convert PreQ1 to queuine (Q), resulting in the hypermodified nucleoside queuosine (7-(((4,5-cis-dihydroxy-2-cyclopenten-1-yl)amino)methyl)-7-deazaguanosine). In Ralstonia pickettii (strain 12J), this protein is Queuine tRNA-ribosyltransferase.